Reading from the N-terminus, the 188-residue chain is Probable nicotinate-nucleotide adenylyltransferase (188 aa).

This sequence belongs to the NadD family.

It catalyses the reaction nicotinate beta-D-ribonucleotide + ATP + H(+) = deamido-NAD(+) + diphosphate. It participates in cofactor biosynthesis; NAD(+) biosynthesis; deamido-NAD(+) from nicotinate D-ribonucleotide: step 1/1. Catalyzes the reversible adenylation of nicotinate mononucleotide (NaMN) to nicotinic acid adenine dinucleotide (NaAD). The chain is Probable nicotinate-nucleotide adenylyltransferase from Salinispora arenicola (strain CNS-205).